A 30-amino-acid chain; its full sequence is Non-toxic phospholipase A2 (30 aa).

Ca(2+) is bound by residues tyrosine 26, glycine 28, and glycine 30.

This sequence belongs to the phospholipase A2 family. Group I subfamily. Homodimer. The cofactor is Ca(2+). Glycosylated. As to expression, expressed by the venom gland.

It localises to the secreted. It carries out the reaction a 1,2-diacyl-sn-glycero-3-phosphocholine + H2O = a 1-acyl-sn-glycero-3-phosphocholine + a fatty acid + H(+). With respect to regulation, enzymatic activity is diminished by Cd(2+) and Hg(2+). Functionally, relatively highly potent phospholipase A2 that displays potent antimicrobial and hemolytic activities. It does not show cytotoxic effects on the three human cell lines tested. PLA2 catalyzes the calcium-dependent hydrolysis of the 2-acyl groups in 3-sn-phosphoglycerides. It shows similar potencies on both Gram-negative and Gram-positive bacteria: B.cereus (MIC&gt;9 ug/ml), B.subtilis (MIC&gt;12 ug/ml), E.faecalis (MIC&gt;7 ug/ml), S.epidermidis (MIC&gt;12 ug/ml), S.aureux (MIC&gt;5 ug/ml), E.coli (MIC&gt;7 ug/ml), K.pneumonia (MIC&gt;8 ug/ml), P.aeruginosa (MIC&gt;10 ug/ml), and S.enteric (MIC&gt;9 ug/ml). It also shows antifungal activities: A.niger (MIC&gt;15 ug/ml), B.cinerea (MIC&gt;12 ug/ml), F.solani (MIC&gt;15 ug/ml), and P.digitatum (MIC&gt;10 ug/ml). The sequence is that of Non-toxic phospholipase A2 from Walterinnesia aegyptia (Desert black snake).